The following is a 94-amino-acid chain: Large ribosomal subunit protein uL23 (94 aa).

This sequence belongs to the universal ribosomal protein uL23 family. Part of the 50S ribosomal subunit. Contacts protein L29, and trigger factor when it is bound to the ribosome.

In terms of biological role, one of the early assembly proteins it binds 23S rRNA. One of the proteins that surrounds the polypeptide exit tunnel on the outside of the ribosome. Forms the main docking site for trigger factor binding to the ribosome. The protein is Large ribosomal subunit protein uL23 of Trichlorobacter lovleyi (strain ATCC BAA-1151 / DSM 17278 / SZ) (Geobacter lovleyi).